We begin with the raw amino-acid sequence, 194 residues long: Large ribosomal subunit protein eL15 (194 aa).

The tract at residues 160 to 194 (RGLTSAGKKGRGLMYKGKGAEKVRPSVRANSKKAK) is disordered.

This sequence belongs to the eukaryotic ribosomal protein eL15 family.

The chain is Large ribosomal subunit protein eL15 from Methanococcus maripaludis (strain C6 / ATCC BAA-1332).